Here is a 242-residue protein sequence, read N- to C-terminus: Probable transcriptional regulatory protein HEAR0561 (242 aa).

Belongs to the TACO1 family.

It is found in the cytoplasm. In Herminiimonas arsenicoxydans, this protein is Probable transcriptional regulatory protein HEAR0561.